The following is a 528-amino-acid chain: Phosphoenolpyruvate carboxykinase (ATP) (528 aa).

Substrate-binding residues include Arg-56, Tyr-192, and Lys-198. Residues Lys-198, His-217, and 233 to 241 (GLSGTGKTT) each bind ATP. Mn(2+) is bound by residues Lys-198 and His-217. A Mn(2+)-binding site is contributed by Asp-254. Residues Glu-282, Arg-319, and Thr-444 each contribute to the ATP site. Arg-319 is a binding site for substrate.

This sequence belongs to the phosphoenolpyruvate carboxykinase (ATP) family. Requires Mn(2+) as cofactor.

The protein localises to the cytoplasm. It catalyses the reaction oxaloacetate + ATP = phosphoenolpyruvate + ADP + CO2. The protein operates within carbohydrate biosynthesis; gluconeogenesis. Its function is as follows. Involved in the gluconeogenesis. Catalyzes the conversion of oxaloacetate (OAA) to phosphoenolpyruvate (PEP) through direct phosphoryl transfer between the nucleoside triphosphate and OAA. The chain is Phosphoenolpyruvate carboxykinase (ATP) from Bacillus anthracis (strain A0248).